The chain runs to 128 residues: Fluoride-specific ion channel FluC (128 aa).

The next 4 membrane-spanning stretches (helical) occupy residues 8–28 (IIFISSGAALGALSRWGLGLL), 38–58 (LGTLVANYLGCLIIGVFLAFF), 71–91 (FFVTGFLGSLTTFSTFSAEVI), and 103–123 (LMLASGHLLGCLLFTALGVFI). Positions 78 and 81 each coordinate Na(+).

The protein belongs to the fluoride channel Fluc/FEX (TC 1.A.43) family.

It is found in the cell inner membrane. It catalyses the reaction fluoride(in) = fluoride(out). With respect to regulation, na(+) is not transported, but it plays an essential structural role and its presence is essential for fluoride channel function. Its function is as follows. Fluoride-specific ion channel. Important for reducing fluoride concentration in the cell, thus reducing its toxicity. This is Fluoride-specific ion channel FluC from Pasteurella multocida (strain Pm70).